The chain runs to 204 residues: MSKILVLNDKFENSGELELPASYAEVNPHNLYLYVKSYLAGMRANTAHTKSRAYVSGGGKKPWRQKGRGGARAGSTRTNVWVGGAVAFGPTNEKNYFQKVNKKQKRLALECALAQKAEAGKLFAVDSLAVESGKTKDAAKIIEALNLRDALIVKDLLDDKTLLAFRNMANCYVVDASEVNAYLVSVFSSVIVEKAVLQTITKEG.

The segment at 53 to 74 is disordered; the sequence is AYVSGGGKKPWRQKGRGGARAG.

This sequence belongs to the universal ribosomal protein uL4 family. As to quaternary structure, part of the 50S ribosomal subunit.

One of the primary rRNA binding proteins, this protein initially binds near the 5'-end of the 23S rRNA. It is important during the early stages of 50S assembly. It makes multiple contacts with different domains of the 23S rRNA in the assembled 50S subunit and ribosome. Its function is as follows. Forms part of the polypeptide exit tunnel. In Campylobacter curvus (strain 525.92), this protein is Large ribosomal subunit protein uL4.